Reading from the N-terminus, the 318-residue chain is Olfactory receptor-like protein COR3 (318 aa).

The Extracellular segment spans residues 1-26; sequence MASGNCTTPTTFILSGLTDNPGLQMP. Asparagine 5 carries an N-linked (GlcNAc...) asparagine glycan. A helical membrane pass occupies residues 27–49; it reads LFMVFLAIYTITLLTNLGLIRLI. Topologically, residues 50-57 are cytoplasmic; it reads SVDLHLQT. A helical membrane pass occupies residues 58 to 79; sequence PMYIFLQNLSFTDAAYSTVITP. The Extracellular segment spans residues 80 to 100; the sequence is KMLATFLEERKTISYVGCILQ. Cysteine 97 and cysteine 179 are joined by a disulfide. The helical transmembrane segment at 101-120 threads the bilayer; it reads YFSFVLLTTSECLLLAVMAY. At 121–139 the chain is on the cytoplasmic side; the sequence is DRYVAICKPLLYPAIMTKA. Residues 140 to 164 form a helical membrane-spanning segment; that stretch reads VCWRLVESLYFLAFLNSLVHTCGLL. Residues 165 to 205 are Extracellular-facing; it reads KLSFCYSNVVNHFFCDISPLFQISSSSIAISELLVIISGSL. A helical membrane pass occupies residues 206–226; that stretch reads FVMSSIIIILISYVFIILTVV. At 227-239 the chain is on the cytoplasmic side; that stretch reads MIRSKDGKYKAFS. Residues 240–260 form a helical membrane-spanning segment; it reads TCTSHLMAVSLFHGTVIFMYL. Topologically, residues 261 to 271 are extracellular; the sequence is RPVKLFSLDTD. A helical transmembrane segment spans residues 272–292; sequence KIASLFYTVVIPMLNPLIYSW. Residues 293–318 lie on the Cytoplasmic side of the membrane; it reads RNKEVKDALRRLTATTFGFIDSKAVQ.

Belongs to the G-protein coupled receptor 1 family.

The protein resides in the cell membrane. Its function is as follows. Odorant receptor. This Gallus gallus (Chicken) protein is Olfactory receptor-like protein COR3 (COR3).